The chain runs to 218 residues: Eukaryotic translation initiation factor 3 subunit K (218 aa).

Residues 42 to 204 (YDLEANLAVL…NIKPKNIVEK (163 aa)) enclose the PCI domain.

It belongs to the eIF-3 subunit K family. As to quaternary structure, component of the eukaryotic translation initiation factor 3 (eIF-3) complex, which is composed of 13 subunits: eif3a, eif3b, eif3c, eif3d, eif3e, eif3f, eif3g, eif3h, eif3i, eif3j, eif3k, eif3l and eif3m.

It localises to the nucleus. The protein resides in the cytoplasm. Its function is as follows. Component of the eukaryotic translation initiation factor 3 (eIF-3) complex, which is involved in protein synthesis of a specialized repertoire of mRNAs and, together with other initiation factors, stimulates binding of mRNA and methionyl-tRNAi to the 40S ribosome. The eIF-3 complex specifically targets and initiates translation of a subset of mRNAs involved in cell proliferation. This Xenopus laevis (African clawed frog) protein is Eukaryotic translation initiation factor 3 subunit K (eif3k).